The chain runs to 343 residues: NADH-cytochrome b5 reductase 2 (343 aa).

A helical membrane pass occupies residues Ile41–Ala61. An FAD-binding FR-type domain is found at Gln92–Glu197. Lys200–Leu235 contacts FAD.

This sequence belongs to the flavoprotein pyridine nucleotide cytochrome reductase family. It depends on FAD as a cofactor.

The protein localises to the mitochondrion outer membrane. It catalyses the reaction 2 Fe(III)-[cytochrome b5] + NADH = 2 Fe(II)-[cytochrome b5] + NAD(+) + H(+). In terms of biological role, may mediate the reduction of outer membrane cytochrome b5. The sequence is that of NADH-cytochrome b5 reductase 2 (mcr-1) from Neurospora crassa (strain ATCC 24698 / 74-OR23-1A / CBS 708.71 / DSM 1257 / FGSC 987).